The following is a 299-amino-acid chain: ATP phosphoribosyltransferase (299 aa).

The protein belongs to the ATP phosphoribosyltransferase family. Long subfamily. Equilibrium between an active dimeric form, an inactive hexameric form and higher aggregates. Interconversion between the various forms is largely reversible and is influenced by the natural substrates and inhibitors of the enzyme. It depends on Mg(2+) as a cofactor.

It is found in the cytoplasm. The catalysed reaction is 1-(5-phospho-beta-D-ribosyl)-ATP + diphosphate = 5-phospho-alpha-D-ribose 1-diphosphate + ATP. The protein operates within amino-acid biosynthesis; L-histidine biosynthesis; L-histidine from 5-phospho-alpha-D-ribose 1-diphosphate: step 1/9. Feedback inhibited by histidine. Its function is as follows. Catalyzes the condensation of ATP and 5-phosphoribose 1-diphosphate to form N'-(5'-phosphoribosyl)-ATP (PR-ATP). Has a crucial role in the pathway because the rate of histidine biosynthesis seems to be controlled primarily by regulation of HisG enzymatic activity. The sequence is that of ATP phosphoribosyltransferase from Buchnera aphidicola subsp. Acyrthosiphon pisum (strain 5A).